Reading from the N-terminus, the 1956-residue chain is Histone-lysine N-methyltransferase SETD1B (1956 aa).

Basic and acidic residues predominate over residues Met-1 to Arg-20. Positions Met-1–His-46 are disordered. An RRM domain is found at Asp-111–Lys-199. Disordered regions lie at residues Leu-226 to Glu-478, Ile-502 to Ser-637, Gly-662 to Pro-696, Lys-926 to Gln-1148, Glu-1341 to Ser-1386, Pro-1420 to Pro-1464, His-1512 to Thr-1553, Thr-1627 to Pro-1655, and Ile-1766 to Glu-1790. Composition is skewed to polar residues over residues Val-254–Pro-290, Pro-298–Pro-312, and Ser-346–Arg-361. A compositionally biased stretch (pro residues) spans Gln-363–Pro-373. Polar residues-rich tracts occupy residues Leu-375 to Ser-407, Gly-416 to Ser-432, and Asp-451 to Pro-464. The span at Ser-517–Ser-527 shows a compositional bias: low complexity. Composition is skewed to polar residues over residues Gly-535–Gly-551 and Ser-575–Gly-593. Residues Arg-594–Val-605 show a composition bias toward basic and acidic residues. The span at Glu-625–Val-634 shows a compositional bias: acidic residues. Over residues Ser-986–Glu-1000 the composition is skewed to acidic residues. The segment covering Thr-1001–Lys-1011 has biased composition (basic and acidic residues). Residues Asp-1068–Glu-1122 are compositionally biased toward acidic residues. A compositionally biased stretch (basic and acidic residues) spans Glu-1341–Val-1352. 2 stretches are compositionally biased toward polar residues: residues Leu-1358 to Val-1367 and Glu-1450 to Pro-1462. Over residues Ser-1541–Tyr-1551 the composition is skewed to basic and acidic residues. Positions Lys-1628–Asn-1638 are enriched in basic residues. Residues Gln-1769–Ala-1783 are compositionally biased toward polar residues. The short motif at Arg-1788 to Arg-1793 is the RxxxRR motif element. One can recognise an SET domain in the interval Lys-1817–Lys-1934. Tyr-1933 is a binding site for S-adenosyl-L-methionine. Residues Val-1940 to Asn-1956 enclose the Post-SET domain.

This sequence belongs to the class V-like SAM-binding methyltransferase superfamily. In terms of assembly, component of the SET1B/COMPASS complex.

Its subcellular location is the nucleus speckle. It is found in the chromosome. It catalyses the reaction L-lysyl(4)-[histone H3] + 3 S-adenosyl-L-methionine = N(6),N(6),N(6)-trimethyl-L-lysyl(4)-[histone H3] + 3 S-adenosyl-L-homocysteine + 3 H(+). In terms of biological role, histone methyltransferase that specifically methylates 'Lys-4' of histone H3, when part of the SET1 histone methyltransferase (HMT) complex, but not if the neighboring 'Lys-9' residue is already methylated. H3 'Lys-4' methylation represents a specific tag for epigenetic transcriptional activation. The sequence is that of Histone-lysine N-methyltransferase SETD1B (setd1b) from Xenopus tropicalis (Western clawed frog).